We begin with the raw amino-acid sequence, 295 residues long: Putative ribose uptake protein RbsU (295 aa).

The next 10 helical transmembrane spans lie at 5–24, 34–56, 63–80, 95–114, 121–139, 154–171, 183–205, 220–237, 244–266, and 276–293; these read ALLI…TIAS, ILGT…GLAF, FFSI…IITF, TTAF…LGNW, LLGA…MTVW, AVLL…YSAA, FLPQ…TIKG, IFSG…LISA, LATG…IWFL, and TVTI…TITV.

Belongs to the GRP transporter (TC 2.A.7.5) family.

It is found in the cell membrane. Could be involved in the uptake of ribose. The sequence is that of Putative ribose uptake protein RbsU (rbsU) from Enterococcus faecalis (strain ATCC 700802 / V583).